The chain runs to 91 residues: CRISPR-associated endoribonuclease Cas2 2 (91 aa).

Mg(2+) is bound at residue aspartate 8.

This sequence belongs to the CRISPR-associated endoribonuclease Cas2 protein family. In terms of assembly, homodimer, forms a heterotetramer with a Cas1 homodimer. Mg(2+) is required as a cofactor.

CRISPR (clustered regularly interspaced short palindromic repeat), is an adaptive immune system that provides protection against mobile genetic elements (viruses, transposable elements and conjugative plasmids). CRISPR clusters contain sequences complementary to antecedent mobile elements and target invading nucleic acids. CRISPR clusters are transcribed and processed into CRISPR RNA (crRNA). Functions as a ssRNA-specific endoribonuclease. Involved in the integration of spacer DNA into the CRISPR cassette. The sequence is that of CRISPR-associated endoribonuclease Cas2 2 from Pyrobaculum aerophilum (strain ATCC 51768 / DSM 7523 / JCM 9630 / CIP 104966 / NBRC 100827 / IM2).